An 81-amino-acid chain; its full sequence is ATP synthase subunit C, plastid (81 aa).

The next 2 helical transmembrane spans lie at 3-23 (PIIS…ASIG) and 57-77 (LAFM…LLFA).

Belongs to the ATPase C chain family. In terms of assembly, F-type ATPases have 2 components, F(1) - the catalytic core - and F(0) - the membrane proton channel. F(1) has five subunits: alpha(3), beta(3), gamma(1), delta(1), epsilon(1). F(0) has four main subunits: a(1), b(1), b'(1) and c(10-14). The alpha and beta chains form an alternating ring which encloses part of the gamma chain. F(1) is attached to F(0) by a central stalk formed by the gamma and epsilon chains, while a peripheral stalk is formed by the delta, b and b' chains.

It is found in the plastid membrane. Functionally, f(1)F(0) ATP synthase produces ATP from ADP in the presence of a proton or sodium gradient. F-type ATPases consist of two structural domains, F(1) containing the extramembraneous catalytic core and F(0) containing the membrane proton channel, linked together by a central stalk and a peripheral stalk. During catalysis, ATP synthesis in the catalytic domain of F(1) is coupled via a rotary mechanism of the central stalk subunits to proton translocation. Key component of the F(0) channel; it plays a direct role in translocation across the membrane. A homomeric c-ring of between 10-14 subunits forms the central stalk rotor element with the F(1) delta and epsilon subunits. This Cuscuta gronovii (Common dodder) protein is ATP synthase subunit C, plastid.